Reading from the N-terminus, the 168-residue chain is Small ribosomal subunit protein uS9 (168 aa).

The segment covering 1–15 (MAQNEETTEAVEAEE) has biased composition (acidic residues). The disordered stretch occupies residues 1–34 (MAQNEETTEAVEAEETLTSYTSESGAAEAAAPKK).

Belongs to the universal ribosomal protein uS9 family.

In Arthrobacter sp. (strain FB24), this protein is Small ribosomal subunit protein uS9.